Here is a 329-residue protein sequence, read N- to C-terminus: MVKTQRVVITPGEPAGIGPDLIVQLAQREWPVELVVCADATLLTDRAAMLGLPLTLRPYSPNSPAQPQTAGTLTLLPVALRESVTAGQLAVENGHYVVETLARACDGCLNGEFAALITGPVHKGVINDAGIPFTGHTEFFEERSQAKKVVMMLATEELRVALATTHLPLRDIADAITPALLHEVIAILHHDLRTKFGIAEPRILVCGLNPHAGEGGHMGTEEIDTIIPVLDELRAQGMKLNGPLPADTLFQPKYLDNADAVLAMYHDQGLPVLKYQGFGRGVNITLGLPFIRTSVDHGTALELAGRGKADVGSFITALNLAIKMIVNTQ.

Residues His-136 and Thr-137 each coordinate substrate. A divalent metal cation-binding residues include His-166, His-211, and His-266. Lys-274, Asn-283, and Arg-292 together coordinate substrate.

The protein belongs to the PdxA family. Homodimer. Zn(2+) is required as a cofactor. Mg(2+) serves as cofactor. It depends on Co(2+) as a cofactor.

The protein localises to the cytoplasm. It carries out the reaction 4-(phosphooxy)-L-threonine + NAD(+) = 3-amino-2-oxopropyl phosphate + CO2 + NADH. It functions in the pathway cofactor biosynthesis; pyridoxine 5'-phosphate biosynthesis; pyridoxine 5'-phosphate from D-erythrose 4-phosphate: step 4/5. Catalyzes the NAD(P)-dependent oxidation of 4-(phosphooxy)-L-threonine (HTP) into 2-amino-3-oxo-4-(phosphooxy)butyric acid which spontaneously decarboxylates to form 3-amino-2-oxopropyl phosphate (AHAP). This is 4-hydroxythreonine-4-phosphate dehydrogenase from Escherichia coli O7:K1 (strain IAI39 / ExPEC).